Here is a 348-residue protein sequence, read N- to C-terminus: MSKQTLVLLYGGRSAEREVSVLSAESVMRAVNYDKFLVKTYFITQMGQFIKTQQFSEKPSESERLMTNETIELTQKIKPSDIYEEGAVVFPVLHGPMGEDGSIQGFLEVLRMPYIGTNVMSSSIAMDKITTKRVLESIGIPQVAYTVYIDGQDLEACLVETLARLTFPIFVKPANMGSSVGISKAQTKVELRKAIQLALTYDSRVLIEQGVVAREIEVGLLGNDKVKSTLPGEVIKDVDFYDYQAKYVDNKITMAIPADVDQSIVTEMRSYAEVAFKALGGCGLSRCDFFLTQDGQVYLNELNTMPGFTQWSMYPLLWENMGLAYPDLIEELVTLAQEIFDQRESHLI.

The ATP-grasp domain occupies 132-334 (KRVLESIGIP…YPDLIEELVT (203 aa)). 162–217 (LARLTFPIFVKPANMGSSVGISKAQTKVELRKAIQLALTYDSRVLIEQGVVAREIE) serves as a coordination point for ATP. Mg(2+) is bound by residues D288, E301, and N303.

This sequence belongs to the D-alanine--D-alanine ligase family. Mg(2+) is required as a cofactor. Mn(2+) serves as cofactor.

It localises to the cytoplasm. The catalysed reaction is 2 D-alanine + ATP = D-alanyl-D-alanine + ADP + phosphate + H(+). It functions in the pathway cell wall biogenesis; peptidoglycan biosynthesis. Its function is as follows. Cell wall formation. The polypeptide is D-alanine--D-alanine ligase (Streptococcus pyogenes serotype M3 (strain SSI-1)).